A 1030-amino-acid polypeptide reads, in one-letter code: MMS19 nucleotide excision repair protein homolog (1030 aa).

N-acetylalanine is present on Ala2. Lys496 carries the post-translational modification N6-acetyllysine. HEAT repeat units lie at residues 866 to 904, 908 to 946, 949 to 987, and 990 to 1028; these read QRFF…RLPK, LPEL…EAPQ, SLHV…LPTP, and LPYK…LGSP. Ser1027 carries the post-translational modification Phosphoserine.

It belongs to the MET18/MMS19 family. Component of the CIA complex. In the CIA complex, interacts directly with CIAO2B and CIAO3. Component of the MMXD complex, composed of CIAO1, ERCC2, CIAO2B, MMS19 and SLC25A5. Interacts with CIAO2B; the interaction is direct. Interacts with ERCC2/XPD; the interaction is direct. Interacts with ERCC3/XPB and NCOA3/RAC3. Interacts with RTEL1; the interaction mediates the association of RTEL1 with the CIA complex. Interacts with BRIP1. Interacts with KIF4A; the interaction facilitates the transfer of Fe-S clusters to KIF4A to ensure proper localization of KIF4A to the mitotic machinery components. Interacts with CCDC117; the interaction is indirect. Post-translationally, ubiquitinated; undergoes 'Lys-48'-linked polyubiquitination by MAGEF1-NSMCE1 ubiquitin ligase complex leading to proteasomal degradation. As to expression, ubiquitously expressed with higher expression in testis.

The protein resides in the nucleus. It is found in the cytoplasm. It localises to the cytoskeleton. Its subcellular location is the spindle. The protein localises to the microtubule organizing center. The protein resides in the centrosome. In terms of biological role, key component of the cytosolic iron-sulfur protein assembly (CIA) complex, a multiprotein complex that mediates the incorporation of iron-sulfur cluster into apoproteins specifically involved in DNA metabolism and genomic integrity. In the CIA complex, MMS19 acts as an adapter between early-acting CIA components and a subset of cellular target iron-sulfur proteins such as ERCC2/XPD, FANCJ and RTEL1, thereby playing a key role in nucleotide excision repair (NER), homologous recombination-mediated double-strand break DNA repair, DNA replication and RNA polymerase II (POL II) transcription. As part of the mitotic spindle-associated MMXD complex, plays a role in chromosome segregation, probably by facilitating iron-sulfur (Fe-S) cluster assembly into ERCC2/XPD. Together with CIAO2, facilitates the transfer of Fe-S clusters to the motor protein KIF4A, which ensures proper localization of KIF4A to mitotic machinery components to promote the progression of mitosis. Indirectly acts as a transcriptional coactivator of estrogen receptor (ER), via its role in iron-sulfur insertion into some component of the TFIIH-machinery. The polypeptide is MMS19 nucleotide excision repair protein homolog (Homo sapiens (Human)).